Here is a 32-residue protein sequence, read N- to C-terminus: Conotoxin sr7a (32 aa).

3 disulfide bridges follow: cysteine 1-cysteine 17, cysteine 8-cysteine 21, and cysteine 16-cysteine 31. The residue at position 32 (serine 32) is a Serine amide.

In terms of tissue distribution, expressed by the venom duct.

Its subcellular location is the secreted. Elicits hyperactivity when injected intracranially into mice and produces paralysis when injected into the pedal muscle of freshwater snails, Pomacea paludosa, but it has no apparent effect after intramuscular injection into the limpet Patella opea or the freshwater fish Lebistes reticulatus. In Conus spurius (Alphabet cone), this protein is Conotoxin sr7a.